A 627-amino-acid chain; its full sequence is 1-deoxy-D-xylulose-5-phosphate synthase (627 aa).

Thiamine diphosphate-binding positions include histidine 80 and 121 to 123 (GHS). Aspartate 152 is a binding site for Mg(2+). Residues 153–154 (GA), asparagine 181, tyrosine 288, and glutamate 370 contribute to the thiamine diphosphate site. A Mg(2+)-binding site is contributed by asparagine 181.

This sequence belongs to the transketolase family. DXPS subfamily. As to quaternary structure, homodimer. Requires Mg(2+) as cofactor. Thiamine diphosphate serves as cofactor.

The enzyme catalyses D-glyceraldehyde 3-phosphate + pyruvate + H(+) = 1-deoxy-D-xylulose 5-phosphate + CO2. It participates in metabolic intermediate biosynthesis; 1-deoxy-D-xylulose 5-phosphate biosynthesis; 1-deoxy-D-xylulose 5-phosphate from D-glyceraldehyde 3-phosphate and pyruvate: step 1/1. In terms of biological role, catalyzes the acyloin condensation reaction between C atoms 2 and 3 of pyruvate and glyceraldehyde 3-phosphate to yield 1-deoxy-D-xylulose-5-phosphate (DXP). The chain is 1-deoxy-D-xylulose-5-phosphate synthase from Aliivibrio fischeri (strain ATCC 700601 / ES114) (Vibrio fischeri).